Here is a 308-residue protein sequence, read N- to C-terminus: tRNA pseudouridine synthase B (308 aa).

The active-site Nucleophile is the aspartate 45.

Belongs to the pseudouridine synthase TruB family. Type 1 subfamily.

The enzyme catalyses uridine(55) in tRNA = pseudouridine(55) in tRNA. Functionally, responsible for synthesis of pseudouridine from uracil-55 in the psi GC loop of transfer RNAs. In Gloeothece citriformis (strain PCC 7424) (Cyanothece sp. (strain PCC 7424)), this protein is tRNA pseudouridine synthase B.